The sequence spans 393 residues: Major outer membrane porin, serovar D (393 aa).

Residues 1–22 (MKKLLKSVLVFAALSSASSLQA) form the signal peptide.

It belongs to the chlamydial porin (CP) (TC 1.B.2) family. As to quaternary structure, part of a disulfide cross-linked outer membrane complex (COMC) composed of the major outer membrane porin (MOMP), the small cysteine-rich protein (OmcA) and the large cysteine-rich periplasmic protein (OmcB).

Its subcellular location is the cell outer membrane. Its function is as follows. In elementary bodies (EBs, the infectious stage, which is able to survive outside the host cell) provides the structural integrity of the outer envelope through disulfide cross-links with the small cysteine-rich protein and the large cysteine-rich periplasmic protein. It has been described in publications as the Sarkosyl-insoluble COMC (Chlamydia outer membrane complex), and serves as the functional equivalent of peptidoglycan. Functionally, permits diffusion of specific solutes through the outer membrane. The polypeptide is Major outer membrane porin, serovar D (ompA) (Chlamydia trachomatis serovar D (strain ATCC VR-885 / DSM 19411 / UW-3/Cx)).